The following is a 247-amino-acid chain: Probable transcriptional regulatory protein MS0710 (247 aa).

This sequence belongs to the TACO1 family.

It localises to the cytoplasm. The chain is Probable transcriptional regulatory protein MS0710 from Mannheimia succiniciproducens (strain KCTC 0769BP / MBEL55E).